The following is a 412-amino-acid chain: Alanyl-tRNA editing protein Aarsd1 (412 aa).

Zn(2+)-binding residues include His108, His112, Cys208, and His212.

This sequence belongs to the class-II aminoacyl-tRNA synthetase family. Alax-L subfamily. Requires Zn(2+) as cofactor.

It localises to the cytoplasm. Its function is as follows. Functions in trans to edit the amino acid moiety from incorrectly charged tRNA(Ala). In Danio rerio (Zebrafish), this protein is Alanyl-tRNA editing protein Aarsd1 (aarsd1).